Reading from the N-terminus, the 1235-residue chain is ATP-dependent helicase/nuclease subunit A (1235 aa).

One can recognise a UvrD-like helicase ATP-binding domain in the interval 10 to 482 (SIWTDDQWSA…IDLNQNFRSR (473 aa)). Residue 31-38 (AAAGSGKT) coordinates ATP. A UvrD-like helicase C-terminal domain is found at 509-799 (QAALKLGASY…RLMTIHSSKG (291 aa)).

It belongs to the helicase family. AddA subfamily. As to quaternary structure, heterodimer of AddA and AddB/RexB. The cofactor is Mg(2+).

It catalyses the reaction Couples ATP hydrolysis with the unwinding of duplex DNA by translocating in the 3'-5' direction.. It carries out the reaction ATP + H2O = ADP + phosphate + H(+). Functionally, the heterodimer acts as both an ATP-dependent DNA helicase and an ATP-dependent, dual-direction single-stranded exonuclease. Recognizes the chi site generating a DNA molecule suitable for the initiation of homologous recombination. The AddA nuclease domain is required for chi fragment generation; this subunit has the helicase and 3' -&gt; 5' nuclease activities. The chain is ATP-dependent helicase/nuclease subunit A from Bacillus velezensis (strain DSM 23117 / BGSC 10A6 / LMG 26770 / FZB42) (Bacillus amyloliquefaciens subsp. plantarum).